We begin with the raw amino-acid sequence, 504 residues long: Maturase K (504 aa).

This sequence belongs to the intron maturase 2 family. MatK subfamily.

It localises to the plastid. It is found in the chloroplast. Its function is as follows. Usually encoded in the trnK tRNA gene intron. Probably assists in splicing its own and other chloroplast group II introns. The protein is Maturase K of Vigna mungo (Black gram).